An 87-amino-acid chain; its full sequence is Small ribosomal subunit protein eS21 (87 aa).

It belongs to the eukaryotic ribosomal protein eS21 family. Component of the small ribosomal subunit. Mature ribosomes consist of a small (40S) and a large (60S) subunit. The 40S subunit contains about 33 different proteins and 1 molecule of RNA (18S). The 60S subunit contains about 49 different proteins and 3 molecules of RNA (25S, 5.8S and 5S).

Its subcellular location is the cytoplasm. In terms of biological role, required for the processing of the 20S rRNA-precursor to mature 18S rRNA in a late step of the maturation of 40S ribosomal subunits. Has a physiological role leading to 18S rRNA stability. In Eremothecium gossypii (strain ATCC 10895 / CBS 109.51 / FGSC 9923 / NRRL Y-1056) (Yeast), this protein is Small ribosomal subunit protein eS21 (RPS21).